A 102-amino-acid polypeptide reads, in one-letter code: Large ribosomal subunit protein bL21 (102 aa).

This sequence belongs to the bacterial ribosomal protein bL21 family. Part of the 50S ribosomal subunit. Contacts protein L20.

Functionally, this protein binds to 23S rRNA in the presence of protein L20. This Macrococcus caseolyticus (strain JCSC5402) (Macrococcoides caseolyticum) protein is Large ribosomal subunit protein bL21.